Here is a 156-residue protein sequence, read N- to C-terminus: ATP synthase subunit b', chloroplastic (156 aa).

The helical transmembrane segment at 24–44 (ATLPLVAIQFILLMVTLNIIL) threads the bilayer.

Belongs to the ATPase B chain family. As to quaternary structure, F-type ATPases have 2 components, F(1) - the catalytic core - and F(0) - the membrane proton channel. F(1) has five subunits: alpha(3), beta(3), gamma(1), delta(1), epsilon(1). F(0) has four main subunits: a(1), b(1), b'(1) and c(10-14). The alpha and beta chains form an alternating ring which encloses part of the gamma chain. F(1) is attached to F(0) by a central stalk formed by the gamma and epsilon chains, while a peripheral stalk is formed by the delta, b and b' chains.

The protein resides in the plastid. It localises to the chloroplast thylakoid membrane. In terms of biological role, f(1)F(0) ATP synthase produces ATP from ADP in the presence of a proton or sodium gradient. F-type ATPases consist of two structural domains, F(1) containing the extramembraneous catalytic core and F(0) containing the membrane proton channel, linked together by a central stalk and a peripheral stalk. During catalysis, ATP synthesis in the catalytic domain of F(1) is coupled via a rotary mechanism of the central stalk subunits to proton translocation. Component of the F(0) channel, it forms part of the peripheral stalk, linking F(1) to F(0). The b'-subunit is a diverged and duplicated form of b found in plants and photosynthetic bacteria. The protein is ATP synthase subunit b', chloroplastic of Thalassiosira pseudonana (Marine diatom).